The primary structure comprises 93 residues: Cobalt transport protein CbiN (93 aa).

2 helical membrane passes run 5–25 and 63–83; these read LMLLAMVVALVILPFFINHGG and LLFTLQGSLGAAVIFYILGYC.

This sequence belongs to the CbiN family. As to quaternary structure, forms an energy-coupling factor (ECF) transporter complex composed of an ATP-binding protein (A component, CbiO), a transmembrane protein (T component, CbiQ) and 2 possible substrate-capture proteins (S components, CbiM and CbiN) of unknown stoichimetry.

It is found in the cell inner membrane. It participates in cofactor biosynthesis; adenosylcobalamin biosynthesis. Part of the energy-coupling factor (ECF) transporter complex CbiMNOQ involved in cobalt import. The protein is Cobalt transport protein CbiN of Salmonella agona (strain SL483).